The sequence spans 316 residues: MKIIFAGTPEFAAVALAALHAAGFEIPLVLTQPDRPAGRGMQLHASAVKQFALAHDIPVAQPVSLRLDGKYPEVAAEAHALLKATPHDVMVVAAYGLILPQSILDIPPRGCINIHASLLPRWRGAAPIHRAIESGDAETGVTIMQMELGLDTGPMLAMQRLPITADDTTASLHDKLATLGGEMIVQTLRRMEQGDLPAEPQPDGANYAAKILKEEATLDFTQPAEQLARKIRAFNPFPGAAATCDGTLIKFWHAQAVPASNQLPPGQVIAANPHDGVLVACGDGALRVTELQKPGGKRLSAVEFLKGFTLEDKRFQ.

Position 117-120 (Ser117–Pro120) interacts with (6S)-5,6,7,8-tetrahydrofolate.

The protein belongs to the Fmt family.

The catalysed reaction is L-methionyl-tRNA(fMet) + (6R)-10-formyltetrahydrofolate = N-formyl-L-methionyl-tRNA(fMet) + (6S)-5,6,7,8-tetrahydrofolate + H(+). Attaches a formyl group to the free amino group of methionyl-tRNA(fMet). The formyl group appears to play a dual role in the initiator identity of N-formylmethionyl-tRNA by promoting its recognition by IF2 and preventing the misappropriation of this tRNA by the elongation apparatus. The protein is Methionyl-tRNA formyltransferase of Janthinobacterium sp. (strain Marseille) (Minibacterium massiliensis).